The chain runs to 241 residues: Gamma-interferon-inducible lysosomal thiol reductase-like protein (241 aa).

The N-terminal stretch at 1-18 is a signal peptide; that stretch reads MLFKSLLLLSVYAVTCYG. N-linked (GlcNAc...) asparagine glycans are attached at residues Asn105 and Asn152. Residues 218–235 form a helical membrane-spanning segment; the sequence is STGSAISSLGMIVTVVAV.

This sequence belongs to the GILT family. Salivary gland (at protein level). Low-level expression in midgut (at protein level). Expressed in head and leg tissues. Ovary. Fat body. As to expression, (Microbial infection) Detected with Plasmodium berghei sporozoites isolated from the saliva of infected Anopheles gambiae mosquitoes (at protein level).

The protein resides in the membrane. Functionally, required for normal development of ovary and testis. Its function is as follows. (Microbial infection) Interacts with the surface of Plasmodium berghei sporozoites. Reduces P.berghei sporozoite cell traversal activity and transmission. Limits the motility of P.berghei sporozoites. Decreases the levels of host liver infection by P.berghei sporozoites. Does not affect P.berghei sporozoite viability. Indirectly promotes P.berghei survival in mosquitoes by influencing ovarian development and the subsequent production of 20-hydroxyecdysone and vitellogenin, which, in turn, modulates TEP1-dependent parasite killing. Promotes P.berghei infection in mosquitoes, most likely impacting the oocyst stage of parasite development. (Microbial infection) Promotes Plasmodium falciparum survival in mosquitoes. The sequence is that of Gamma-interferon-inducible lysosomal thiol reductase-like protein from Anopheles gambiae (African malaria mosquito).